Reading from the N-terminus, the 416-residue chain is Serine hydroxymethyltransferase (416 aa).

(6S)-5,6,7,8-tetrahydrofolate-binding positions include Leu121 and Gly125 to Leu127. Residue Lys229 is modified to N6-(pyridoxal phosphate)lysine.

It belongs to the SHMT family. As to quaternary structure, homodimer. Requires pyridoxal 5'-phosphate as cofactor.

The protein localises to the cytoplasm. The enzyme catalyses (6R)-5,10-methylene-5,6,7,8-tetrahydrofolate + glycine + H2O = (6S)-5,6,7,8-tetrahydrofolate + L-serine. It functions in the pathway one-carbon metabolism; tetrahydrofolate interconversion. It participates in amino-acid biosynthesis; glycine biosynthesis; glycine from L-serine: step 1/1. Functionally, catalyzes the reversible interconversion of serine and glycine with tetrahydrofolate (THF) serving as the one-carbon carrier. This reaction serves as the major source of one-carbon groups required for the biosynthesis of purines, thymidylate, methionine, and other important biomolecules. Also exhibits THF-independent aldolase activity toward beta-hydroxyamino acids, producing glycine and aldehydes, via a retro-aldol mechanism. The protein is Serine hydroxymethyltransferase of Bordetella avium (strain 197N).